The primary structure comprises 234 residues: LexA repressor (234 aa).

The segment at residues 41–61 (RAEIANELGFKSANAAEEHLQ) is a DNA-binding region (H-T-H motif). Active-site for autocatalytic cleavage activity residues include Ser152 and Lys189.

It belongs to the peptidase S24 family. Homodimer.

It carries out the reaction Hydrolysis of Ala-|-Gly bond in repressor LexA.. Represses a number of genes involved in the response to DNA damage (SOS response), including recA and lexA. In the presence of single-stranded DNA, RecA interacts with LexA causing an autocatalytic cleavage which disrupts the DNA-binding part of LexA, leading to derepression of the SOS regulon and eventually DNA repair. This Polaromonas sp. (strain JS666 / ATCC BAA-500) protein is LexA repressor.